Consider the following 172-residue polypeptide: ATP synthase subunit b, chloroplastic (172 aa).

Residues 15–37 traverse the membrane as a helical segment; it reads ILATNLINLSAVLGVLIFFGKGV.

It belongs to the ATPase B chain family. In terms of assembly, F-type ATPases have 2 components, F(1) - the catalytic core - and F(0) - the membrane proton channel. F(1) has five subunits: alpha(3), beta(3), gamma(1), delta(1), epsilon(1). F(0) has four main subunits: a(1), b(1), b'(1) and c(10-14). The alpha and beta chains form an alternating ring which encloses part of the gamma chain. F(1) is attached to F(0) by a central stalk formed by the gamma and epsilon chains, while a peripheral stalk is formed by the delta, b and b' chains.

The protein resides in the plastid. It localises to the chloroplast thylakoid membrane. Functionally, f(1)F(0) ATP synthase produces ATP from ADP in the presence of a proton or sodium gradient. F-type ATPases consist of two structural domains, F(1) containing the extramembraneous catalytic core and F(0) containing the membrane proton channel, linked together by a central stalk and a peripheral stalk. During catalysis, ATP synthesis in the catalytic domain of F(1) is coupled via a rotary mechanism of the central stalk subunits to proton translocation. In terms of biological role, component of the F(0) channel, it forms part of the peripheral stalk, linking F(1) to F(0). The sequence is that of ATP synthase subunit b, chloroplastic from Pisum sativum (Garden pea).